A 303-amino-acid chain; its full sequence is Acetaldehyde dehydrogenase 2 (303 aa).

Catalysis depends on cysteine 130, which acts as the Acyl-thioester intermediate. NAD(+) contacts are provided by residues serine 161–asparagine 169 and asparagine 272.

This sequence belongs to the acetaldehyde dehydrogenase family.

The catalysed reaction is acetaldehyde + NAD(+) + CoA = acetyl-CoA + NADH + H(+). In Burkholderia vietnamiensis (strain G4 / LMG 22486) (Burkholderia cepacia (strain R1808)), this protein is Acetaldehyde dehydrogenase 2.